Here is a 205-residue protein sequence, read N- to C-terminus: Cytochrome c oxidase subunit 3 (205 aa).

Transmembrane regions (helical) follow at residues 29–49 (TIVF…MYFV), 72–92 (ALLI…GVFA), 104–124 (WFLV…YEYI), 142–162 (FFIT…AFVV), and 184–204 (SYYW…IYFI).

As to quaternary structure, associates with subunits I, II and IV to form cytochrome c oxidase. The 4 subunit cytochrome c oxidase forms a supercomplex with the menaquinol-cytochrome c reductase complex (cytochrome bc1).

Its subcellular location is the cell membrane. It carries out the reaction 4 Fe(II)-[cytochrome c] + O2 + 8 H(+)(in) = 4 Fe(III)-[cytochrome c] + 2 H2O + 4 H(+)(out). The polypeptide is Cytochrome c oxidase subunit 3 (ctaE) (Corynebacterium glutamicum (strain ATCC 13032 / DSM 20300 / JCM 1318 / BCRC 11384 / CCUG 27702 / LMG 3730 / NBRC 12168 / NCIMB 10025 / NRRL B-2784 / 534)).